The chain runs to 92 residues: Large ribosomal subunit protein eL31 (92 aa).

The residue at position 2 (S2) is an N-acetylserine.

This sequence belongs to the eukaryotic ribosomal protein eL31 family. Part of the 50S ribosomal subunit.

In terms of biological role, binds to the 23S rRNA. Located at the polypeptide exit tunnel on the outside of the subunit. The chain is Large ribosomal subunit protein eL31 (rpl31e) from Haloarcula marismortui (strain ATCC 43049 / DSM 3752 / JCM 8966 / VKM B-1809) (Halobacterium marismortui).